The following is a 142-amino-acid chain: Large ribosomal subunit protein uL11 (142 aa).

The protein belongs to the universal ribosomal protein uL11 family. Part of the ribosomal stalk of the 50S ribosomal subunit. Interacts with L10 and the large rRNA to form the base of the stalk. L10 forms an elongated spine to which L12 dimers bind in a sequential fashion forming a multimeric L10(L12)X complex. One or more lysine residues are methylated.

Functionally, forms part of the ribosomal stalk which helps the ribosome interact with GTP-bound translation factors. The sequence is that of Large ribosomal subunit protein uL11 from Erwinia tasmaniensis (strain DSM 17950 / CFBP 7177 / CIP 109463 / NCPPB 4357 / Et1/99).